A 303-amino-acid polypeptide reads, in one-letter code: UDP-3-O-acyl-N-acetylglucosamine deacetylase (303 aa).

3 residues coordinate Zn(2+): H78, H237, and D241. Residue H264 is the Proton donor of the active site.

This sequence belongs to the LpxC family. It depends on Zn(2+) as a cofactor.

It carries out the reaction a UDP-3-O-[(3R)-3-hydroxyacyl]-N-acetyl-alpha-D-glucosamine + H2O = a UDP-3-O-[(3R)-3-hydroxyacyl]-alpha-D-glucosamine + acetate. It participates in glycolipid biosynthesis; lipid IV(A) biosynthesis; lipid IV(A) from (3R)-3-hydroxytetradecanoyl-[acyl-carrier-protein] and UDP-N-acetyl-alpha-D-glucosamine: step 2/6. Its function is as follows. Catalyzes the hydrolysis of UDP-3-O-myristoyl-N-acetylglucosamine to form UDP-3-O-myristoylglucosamine and acetate, the committed step in lipid A biosynthesis. In Coxiella burnetii (strain CbuK_Q154) (Coxiella burnetii (strain Q154)), this protein is UDP-3-O-acyl-N-acetylglucosamine deacetylase.